The chain runs to 210 residues: Thymidylate kinase (210 aa).

Residue glycine 10–serine 17 participates in ATP binding.

Belongs to the thymidylate kinase family.

The enzyme catalyses dTMP + ATP = dTDP + ADP. In terms of biological role, phosphorylation of dTMP to form dTDP in both de novo and salvage pathways of dTTP synthesis. In Pseudomonas fluorescens (strain SBW25), this protein is Thymidylate kinase.